A 489-amino-acid polypeptide reads, in one-letter code: CDK5RAP3 protein homolog (489 aa).

The protein belongs to the CDK5RAP3 family.

Substrate adapter of E3 ligase complexes mediating ufmylation, the covalent attachment of the ubiquitin-like modifier UFM1 to substrate proteins, and which is involved in various processes, such as ribosome recycling and reticulophagy (also called ER-phagy). This is CDK5RAP3 protein homolog from Caenorhabditis elegans.